A 52-amino-acid polypeptide reads, in one-letter code: uncharacterized protein (52 aa).

This is an uncharacterized protein from Homo sapiens (Human).